The following is a 297-amino-acid chain: T-cell leukemia homeobox protein 1 (297 aa).

Residues 153–174 (DRFTGHPYQNRTPPKKKKPRTS) form a disordered region. Residues 168–227 (KKKPRTSFTRLQICELEKRFHRQKYLASAERAALAKALKMTDAQVKTWFQNRRTKWRRQT) constitute a DNA-binding region (homeobox).

The protein localises to the nucleus. Seems to be involved in the development of cranial sensory innervation from peripheral ganglia. The sequence is that of T-cell leukemia homeobox protein 1 (TLX1) from Gallus gallus (Chicken).